An 80-amino-acid chain; its full sequence is uncharacterized protein (80 aa).

The N-terminal stretch at Met1 to Ala23 is a signal peptide.

This is an uncharacterized protein from Bacillus subtilis (strain 168).